The chain runs to 200 residues: Adenylate kinase (200 aa).

ATP is bound at residue 11 to 16 (GAGKGT). An NMP region spans residues 31-60 (STGDIFRQNIKDRTELGQQVQALVDAGNYV). AMP is bound by residues threonine 32, arginine 37, 58–60 (NYV), 86–89 (GYPR), and glutamine 93. Residues 127–137 (RRAAEQGRADD) form an LID region. Residue arginine 128 participates in ATP binding. AMP-binding residues include arginine 134 and arginine 145. Glycine 173 is an ATP binding site.

The protein belongs to the adenylate kinase family. As to quaternary structure, monomer.

The protein localises to the cytoplasm. It carries out the reaction AMP + ATP = 2 ADP. It participates in purine metabolism; AMP biosynthesis via salvage pathway; AMP from ADP: step 1/1. Catalyzes the reversible transfer of the terminal phosphate group between ATP and AMP. Plays an important role in cellular energy homeostasis and in adenine nucleotide metabolism. The protein is Adenylate kinase of Clavibacter michiganensis subsp. michiganensis (strain NCPPB 382).